The primary structure comprises 129 residues: uncharacterized protein (129 aa).

Residues 85-108 (SSAADSDDSSSCSECDSDALLSDD) show a composition bias toward low complexity. Positions 85 to 110 (SSAADSDDSSSCSECDSDALLSDDGP) are disordered.

This is an uncharacterized protein from Microplitis demolitor (Parasitoid wasp).